The following is a 130-amino-acid chain: Large ribosomal subunit protein bL21 (130 aa).

The interval 110-130 (KTAAQPAADEAVAANEVDSEA) is disordered. The span at 112 to 130 (AAQPAADEAVAANEVDSEA) shows a compositional bias: low complexity.

This sequence belongs to the bacterial ribosomal protein bL21 family. In terms of assembly, part of the 50S ribosomal subunit. Contacts protein L20.

This protein binds to 23S rRNA in the presence of protein L20. The sequence is that of Large ribosomal subunit protein bL21 from Cyanothece sp. (strain PCC 7425 / ATCC 29141).